The primary structure comprises 230 residues: DNA repair protein RecO (230 aa).

This sequence belongs to the RecO family.

Involved in DNA repair and RecF pathway recombination. The polypeptide is DNA repair protein RecO (Pseudoalteromonas translucida (strain TAC 125)).